The following is a 611-amino-acid chain: Dihydroxy-acid dehydratase (611 aa).

Position 81 (D81) interacts with Mg(2+). Residue C122 coordinates [2Fe-2S] cluster. Mg(2+)-binding residues include D123 and K124. Position 124 is an N6-carboxylysine (K124). Residue C195 coordinates [2Fe-2S] cluster. E491 lines the Mg(2+) pocket. S517 acts as the Proton acceptor in catalysis.

Belongs to the IlvD/Edd family. Homodimer. [2Fe-2S] cluster is required as a cofactor. The cofactor is Mg(2+).

It catalyses the reaction (2R)-2,3-dihydroxy-3-methylbutanoate = 3-methyl-2-oxobutanoate + H2O. The enzyme catalyses (2R,3R)-2,3-dihydroxy-3-methylpentanoate = (S)-3-methyl-2-oxopentanoate + H2O. The protein operates within amino-acid biosynthesis; L-isoleucine biosynthesis; L-isoleucine from 2-oxobutanoate: step 3/4. Its pathway is amino-acid biosynthesis; L-valine biosynthesis; L-valine from pyruvate: step 3/4. In terms of biological role, functions in the biosynthesis of branched-chain amino acids. Catalyzes the dehydration of (2R,3R)-2,3-dihydroxy-3-methylpentanoate (2,3-dihydroxy-3-methylvalerate) into 2-oxo-3-methylpentanoate (2-oxo-3-methylvalerate) and of (2R)-2,3-dihydroxy-3-methylbutanoate (2,3-dihydroxyisovalerate) into 2-oxo-3-methylbutanoate (2-oxoisovalerate), the penultimate precursor to L-isoleucine and L-valine, respectively. The chain is Dihydroxy-acid dehydratase from Histophilus somni (strain 129Pt) (Haemophilus somnus).